The primary structure comprises 147 residues: Holo-[acyl-carrier-protein] synthase (147 aa).

The Mg(2+) site is built by Asp7 and Glu60.

This sequence belongs to the P-Pant transferase superfamily. AcpS family. Requires Mg(2+) as cofactor.

It localises to the cytoplasm. The catalysed reaction is apo-[ACP] + CoA = holo-[ACP] + adenosine 3',5'-bisphosphate + H(+). In terms of biological role, transfers the 4'-phosphopantetheine moiety from coenzyme A to a Ser of acyl-carrier-protein. This chain is Holo-[acyl-carrier-protein] synthase, found in Bifidobacterium animalis subsp. lactis (strain AD011).